Reading from the N-terminus, the 1893-residue chain is MILKSFLLGNLVSLCMKIINSVVVVGLYYGFLTTFSIGPSYLFLLRAQVMEEGEEGTEKKVSAITGFITGQLMMFISIYYAPLHLALGRPHTITVLALPYLLFHFFWNNHKHFFDYGSTTRNSMRNLSIQCVFLNNLIFQLLNHFILPSSMLARLVNIYMFRCNNKMLFVTSSFVGWLIGHILFMKWVGLVLVWIRQNPSIRSNVLIRSNKYLVSELRNSMARIFSILLFITCVYYLGRIPSPILTKKMKETSETEERGESEEETDVEIERTSETKGTKQEQERSTEEDPSPSLFSEEKEDPDKIDETEEIRVNGKEKTKDEFHFKETCYKNSPVYETSYLDGNQENSKLEILKEDEDNKNKKWFEKPLVTLLFDYKRWNRPLRYIKARFQIKKAVRNEMSQYFFYTCLSDGKQRISFTYPPSLSIFLEMIQRKMSLSTTERLSYDELYNHWIYTNEQKENTLRKEFITRIEALDNGSLTLDVLEKRTRLCNDATKKEYLPKIYDPFLNGPYRGTIKKMFSPSIINETSRENSIEKFRINKIYGILFAIDYREFEHTFDRKSLSTKIGYFLNLINQFTIESPSNLNLKRLSLFPEQGKVDSDSEDQAKFLNFFFDRVITDPKDQTIRKKSIGIKEISKKVPRWSYKLMKNEEEGETLVVYQEIRSRKSKHVVIFTDNQQNADTYTANANKDIDNSEQTNEVALIRYSQQSDFRRDIIKGSMRAQRRKIVIRELFQANVHSPLFLDRIYKPIFFSFDISGLIKLIFENWKEKNKKLKIPNYAEEKTREKRQKAKREEKARIKIAEVWDTVLFAQVIRGCLLLTQSIFRKYIILPSLIIAKNIGRMLLFQSPEWSEDLKDWNREMHVKCTYNGVQLSETEFPQNWLRDGIQIKILFPFCLKPWHKPQERSLDKDSMKDKVKKFCFLTVWGMETDLPFGSPRKRPSFFKPILKELEKRIRKFKNKCFLVLTVLKERTKLFIFLRVSKETKKWVIKSVLFINIKKIIKELLKINPTLLFGLREVYESSETQKQKDSIINNQMIHKSSIQIRSMNWTNYSLTEKKVKDLTDRTSTIRKKIEKIIKDKKKLFLTPEINISPNKASYNAKRLESQKSIWQILKRRNSRLIRKLHYFIKFFIERIYIDILLCLINIPRTNAQFFIESTKKIIDKYVYNNERNQKRIGKPNQKKIHFISIIKRSVSSISNKSSQIFCDLSSLSQAYVFYKLSQTQVINLYKLRSVLQYNGTSLFLKNERKDYFGFGAHEIFHYELRHKKLRNSGMNQWKNWLRGHYQYKYLSPIIWSRLVPQKWRNRVNQHCVAQNQNKDLSKWDLSQKDQLIHYNKQNDYEADSLTNQKENFKKHYRYDLLSYKYINYEDKNDSYIYGSPLQVNNNQDISYNYNTHKRKFFDMLEGIPINNYLGEDDIMYIEYIKKNPDRKYFDWKILHFCFRKKVDIEVWINTSINSNKNTKTGSNNYQIIDKKGLFYLTQDQEIKPSNQKDLFDWMGMNEEILNRSISNLEPWFFPEFVLLYNTYKMKPWVIPIKLLLLNFNGNKNYSKNRNSNRKQKGNLFISSNEKKLLKLENRNQEEKESAGQVDLGSDVQNQGNLESVLSNHEKDIEEDYAGSDSDMQKRTKKKQFKNHTEAELDLFLKRYLLFQLRWDDSLNQKMINNIKVYCLLLRLINPREICISAIQRGEMSLDLIPVHKDLTLTELMKMKRGIFIIEPIRLSVKNDGQFIMYQTIGISLVHKSKYQTNQRYREERYVDNKNCDKFSARCQKMIGNKDKNHYDLLVPENILSPRRRRKFRILICFNLRNRSGVARNPVFCNGNSCNKFLDENKHLDRDKNQLIKLKKLKLFLWPNYRLEDLACMNRYWFDTNNGSCFSMIRIHMYPRLKIR.

Helical transmembrane passes span 18–38 (IINS…FSIG), 63–83 (AITG…YAPL), 87–107 (LGRP…HFFW), 127–147 (LSIQ…HFIL), 175–195 (VGWL…LVWI), and 224–244 (IFSI…PSPI). Basic and acidic residues-rich tracts occupy residues 249-258 (MKETSETEER) and 268-287 (EIER…RSTE). The tract at residues 249 to 317 (MKETSETEER…TEEIRVNGKE (69 aa)) is disordered. The segment covering 298–309 (EKEDPDKIDETE) has biased composition (acidic residues). A helical transmembrane segment spans residues 1126–1146 (LHYFIKFFIERIYIDILLCLI).

Belongs to the TIC214 family. As to quaternary structure, part of the Tic complex.

The protein localises to the plastid. It localises to the chloroplast inner membrane. In terms of biological role, involved in protein precursor import into chloroplasts. May be part of an intermediate translocation complex acting as a protein-conducting channel at the inner envelope. This is Protein TIC 214 from Vitis vinifera (Grape).